The chain runs to 500 residues: ADP,ATP carrier protein 5 (500 aa).

11 consecutive transmembrane segments (helical) span residues 26–46 (LGKFIPISALMFCILFNQNIL), 62–82 (IAGFAKVYCVTPVAALFVIIY), 94–114 (IFYYLSAFFISCFILFAFVIY), 149–169 (YIVYYSLAELWPNIFYVLLFW), 184–204 (FYTLFSLFGNSSLILVGFLMM), 224–244 (ITLVQVSTTIVAIVAIICCLL), 287–307 (LWLLLICSAAFGFAINLVEAV), 328–348 (LYILWTGVAIIVMTIIGNNVM), 357–377 (AVISPVIIMVTGILFFVLIVF), 381–401 (ILSLFDGAILMSPLALAVSIG), and 469–489 (SISPILMVVFTFVCFAWIYAV).

The protein belongs to the ADP/ATP translocase tlc family.

Its subcellular location is the cell membrane. Its function is as follows. Provides the rickettsial cell with host ATP in exchange for rickettsial ADP. This is an obligate exchange system. This energy acquiring activity is an important component of rickettsial parasitism. The chain is ADP,ATP carrier protein 5 (tlcE) from Rickettsia typhi (strain ATCC VR-144 / Wilmington).